A 54-amino-acid chain; its full sequence is VATVDCSDYPKPACTVEYMPLCGSDNKTYGNKCNFCNAVVDSNGTLTLSHFGKC.

The Kazal-like domain occupies 4–54 (VDCSDYPKPACTVEYMPLCGSDNKTYGNKCNFCNAVVDSNGTLTLSHFGKC). Disulfide bonds link Cys6/Cys36, Cys14/Cys33, and Cys22/Cys54. The N-linked (GlcNAc...) asparagine glycan is linked to Asn43.

Its subcellular location is the secreted. In Anser canagicus (Emperor goose), this protein is Ovomucoid.